Reading from the N-terminus, the 146-residue chain is Hemoglobin subunit beta-2 (146 aa).

The 145-residue stretch at 2–146 (EWTDFERATI…VVSALGRQYH (145 aa)) folds into the Globin domain. Heme b-binding residues include H63 and H92.

This sequence belongs to the globin family. As to quaternary structure, hb3 is a heterotetramer of two alpha-2 chains and two beta-2 chains. Red blood cells.

Involved in oxygen transport from gills to the various peripheral tissues. The chain is Hemoglobin subunit beta-2 (hbb2) from Anarhichas minor (Arctic spotted wolffish).